We begin with the raw amino-acid sequence, 468 residues long: 5-carboxymethyl-2-hydroxymuconate semialdehyde dehydrogenase (468 aa).

The active site involves glutamate 244. The active-site Nucleophile is cysteine 278.

The protein belongs to the aldehyde dehydrogenase family. Homodimer.

The enzyme catalyses 2-hydroxy-5-carboxymethylmuconate semialdehyde + NAD(+) + H2O = (2E,4Z)-5-hydroxypenta-2,4-diene-1,2,5-tricarboxylate + NADH + 2 H(+). The protein operates within aromatic compound metabolism; 4-hydroxyphenylacetate degradation; pyruvate and succinate semialdehyde from 4-hydroxyphenylacetate: step 3/7. Functionally, catalyzes the conversion of 5-carboxymethyl-2-hydroxy-muconic semialdehyde (CHMS) into 5-carboxymethyl-2-hydroxy-muconic acid (CHM or (2E,4Z)-5-hydroxypenta-2,4-diene-1,2,5-tricarboxylate). Is involved in a meta-cleavage pathway for the catabolism of 4-hydroxyphenylacetate (4-HPA) via homoprotocatechuate (HPC or 3,4-dihydroxyphenylacetate). The protein is 5-carboxymethyl-2-hydroxymuconate semialdehyde dehydrogenase of Escherichia coli.